A 286-amino-acid chain; its full sequence is MAGAKEIKTKIASVKNTQKITSAMEMVAASKMRRAQERMAASRPYAESMRKVIGHVAQGSLEYKHPYLEVREAKRVGYIVVATDRGLCGGLNVNLFKKVIADVKSWKAQGAEFEFCPIGARSVQFFKNFGGQVSAHASGLGDAPKLADLIGTVGVMLEAYNEGKLDRLYVVFNKFVNTMTQTPVIEQLLPLPKSEDDETAHRWDYIYEPDPKALLDTLLVRYVESQVYQGVVENIASEQAARMVAMKSATDNAGELINDLQLVYNKARQAAITQELSEIVSGASAV.

It belongs to the ATPase gamma chain family. As to quaternary structure, F-type ATPases have 2 components, CF(1) - the catalytic core - and CF(0) - the membrane proton channel. CF(1) has five subunits: alpha(3), beta(3), gamma(1), delta(1), epsilon(1). CF(0) has three main subunits: a, b and c.

The protein localises to the cell inner membrane. In terms of biological role, produces ATP from ADP in the presence of a proton gradient across the membrane. The gamma chain is believed to be important in regulating ATPase activity and the flow of protons through the CF(0) complex. The protein is ATP synthase gamma chain of Shewanella baltica (strain OS223).